Reading from the N-terminus, the 570-residue chain is Sulfite reductase [NADPH] hemoprotein beta-component (570 aa).

[4Fe-4S] cluster contacts are provided by cysteine 434, cysteine 440, cysteine 479, and cysteine 483. Cysteine 483 is a siroheme binding site.

This sequence belongs to the nitrite and sulfite reductase 4Fe-4S domain family. In terms of assembly, alpha(8)-beta(8). The alpha component is a flavoprotein, the beta component is a hemoprotein. Requires siroheme as cofactor. [4Fe-4S] cluster serves as cofactor.

The enzyme catalyses hydrogen sulfide + 3 NADP(+) + 3 H2O = sulfite + 3 NADPH + 4 H(+). It functions in the pathway sulfur metabolism; hydrogen sulfide biosynthesis; hydrogen sulfide from sulfite (NADPH route): step 1/1. Its function is as follows. Component of the sulfite reductase complex that catalyzes the 6-electron reduction of sulfite to sulfide. This is one of several activities required for the biosynthesis of L-cysteine from sulfate. This is Sulfite reductase [NADPH] hemoprotein beta-component from Shigella boydii serotype 4 (strain Sb227).